The sequence spans 309 residues: Transcription initiation factor IIB 1 (309 aa).

2 tandem repeats follow at residues 125 to 208 and 219 to 300.

This sequence belongs to the TFIIB family.

Stabilizes TBP binding to an archaeal box-A promoter. Also responsible for recruiting RNA polymerase II to the pre-initiation complex (DNA-TBP-TFIIB). This chain is Transcription initiation factor IIB 1, found in Saccharolobus solfataricus (strain ATCC 35092 / DSM 1617 / JCM 11322 / P2) (Sulfolobus solfataricus).